A 227-amino-acid chain; its full sequence is Cytochrome c oxidase subunit 2 (227 aa).

The Mitochondrial intermembrane segment spans residues 1–14; the sequence is MAYPVQLGFQDAAS. The chain crosses the membrane as a helical span at residues 15–45; it reads PIMEELLYFHDHTLMIMFLISSLVLYIISLM. Residues 46–59 are Mitochondrial matrix-facing; that stretch reads LTTELMHTNTMDAQ. The chain crosses the membrane as a helical span at residues 60–87; sequence EVETVWTILPAAILILIALPSLRILYMM. Residues 88 to 227 lie on the Mitochondrial intermembrane side of the membrane; it reads DEITTPSLTL…HFEEWLLSML (140 aa). Positions 161, 196, 198, 200, 204, and 207 each coordinate Cu cation. E198 lines the Mg(2+) pocket.

This sequence belongs to the cytochrome c oxidase subunit 2 family. As to quaternary structure, component of the cytochrome c oxidase (complex IV, CIV), a multisubunit enzyme composed of 14 subunits. The complex is composed of a catalytic core of 3 subunits MT-CO1, MT-CO2 and MT-CO3, encoded in the mitochondrial DNA, and 11 supernumerary subunits COX4I, COX5A, COX5B, COX6A, COX6B, COX6C, COX7A, COX7B, COX7C, COX8 and NDUFA4, which are encoded in the nuclear genome. The complex exists as a monomer or a dimer and forms supercomplexes (SCs) in the inner mitochondrial membrane with NADH-ubiquinone oxidoreductase (complex I, CI) and ubiquinol-cytochrome c oxidoreductase (cytochrome b-c1 complex, complex III, CIII), resulting in different assemblies (supercomplex SCI(1)III(2)IV(1) and megacomplex MCI(2)III(2)IV(2)). Found in a complex with TMEM177, COA6, COX18, COX20, SCO1 and SCO2. Interacts with TMEM177 in a COX20-dependent manner. Interacts with COX20. Interacts with COX16. Cu cation is required as a cofactor.

The protein resides in the mitochondrion inner membrane. It carries out the reaction 4 Fe(II)-[cytochrome c] + O2 + 8 H(+)(in) = 4 Fe(III)-[cytochrome c] + 2 H2O + 4 H(+)(out). In terms of biological role, component of the cytochrome c oxidase, the last enzyme in the mitochondrial electron transport chain which drives oxidative phosphorylation. The respiratory chain contains 3 multisubunit complexes succinate dehydrogenase (complex II, CII), ubiquinol-cytochrome c oxidoreductase (cytochrome b-c1 complex, complex III, CIII) and cytochrome c oxidase (complex IV, CIV), that cooperate to transfer electrons derived from NADH and succinate to molecular oxygen, creating an electrochemical gradient over the inner membrane that drives transmembrane transport and the ATP synthase. Cytochrome c oxidase is the component of the respiratory chain that catalyzes the reduction of oxygen to water. Electrons originating from reduced cytochrome c in the intermembrane space (IMS) are transferred via the dinuclear copper A center (CU(A)) of subunit 2 and heme A of subunit 1 to the active site in subunit 1, a binuclear center (BNC) formed by heme A3 and copper B (CU(B)). The BNC reduces molecular oxygen to 2 water molecules using 4 electrons from cytochrome c in the IMS and 4 protons from the mitochondrial matrix. In Hapalemur griseus (Gray gentle lemur), this protein is Cytochrome c oxidase subunit 2 (MT-CO2).